Consider the following 388-residue polypeptide: Outer membrane protein assembly factor BamB (388 aa).

The N-terminal stretch at 1–17 is a signal peptide; that stretch reads MVLSLLSVMLLSGYKFL.

This sequence belongs to the BamB family. As to quaternary structure, part of the Bam complex, which is composed of the outer membrane protein BamA, and four lipoproteins BamB, BamC, BamD and BamE.

It is found in the cell outer membrane. In terms of biological role, part of the outer membrane protein assembly complex, which is involved in assembly and insertion of beta-barrel proteins into the outer membrane. This is Outer membrane protein assembly factor BamB from Moranella endobia (strain PCIT).